A 482-amino-acid polypeptide reads, in one-letter code: tRNA sulfurtransferase (482 aa).

The THUMP domain maps to 61-165 (QQVLEILTTT…DDKLNQILAH (105 aa)). ATP-binding positions include 183–184 (LI), Lys265, Gly287, and Gln296. Cys344 and Cys456 form a disulfide bridge. Residues 404 to 482 (IEEHAVVLDI…GFNNVKVYRP (79 aa)) enclose the Rhodanese domain. Catalysis depends on Cys456, which acts as the Cysteine persulfide intermediate.

It belongs to the ThiI family.

Its subcellular location is the cytoplasm. The enzyme catalyses [ThiI sulfur-carrier protein]-S-sulfanyl-L-cysteine + a uridine in tRNA + 2 reduced [2Fe-2S]-[ferredoxin] + ATP + H(+) = [ThiI sulfur-carrier protein]-L-cysteine + a 4-thiouridine in tRNA + 2 oxidized [2Fe-2S]-[ferredoxin] + AMP + diphosphate. The catalysed reaction is [ThiS sulfur-carrier protein]-C-terminal Gly-Gly-AMP + S-sulfanyl-L-cysteinyl-[cysteine desulfurase] + AH2 = [ThiS sulfur-carrier protein]-C-terminal-Gly-aminoethanethioate + L-cysteinyl-[cysteine desulfurase] + A + AMP + 2 H(+). It participates in cofactor biosynthesis; thiamine diphosphate biosynthesis. Its function is as follows. Catalyzes the ATP-dependent transfer of a sulfur to tRNA to produce 4-thiouridine in position 8 of tRNAs, which functions as a near-UV photosensor. Also catalyzes the transfer of sulfur to the sulfur carrier protein ThiS, forming ThiS-thiocarboxylate. This is a step in the synthesis of thiazole, in the thiamine biosynthesis pathway. The sulfur is donated as persulfide by IscS. The sequence is that of tRNA sulfurtransferase from Vibrio vulnificus (strain YJ016).